A 307-amino-acid polypeptide reads, in one-letter code: UDP-N-acetylenolpyruvoylglucosamine reductase (307 aa).

The FAD-binding PCMH-type domain occupies 33 to 197 (TGGNADFYIT…LEAAFTLAPG (165 aa)). Arg176 is an active-site residue. Ser226 acts as the Proton donor in catalysis. The active site involves Glu296.

The protein belongs to the MurB family. It depends on FAD as a cofactor.

The protein localises to the cytoplasm. The catalysed reaction is UDP-N-acetyl-alpha-D-muramate + NADP(+) = UDP-N-acetyl-3-O-(1-carboxyvinyl)-alpha-D-glucosamine + NADPH + H(+). It participates in cell wall biogenesis; peptidoglycan biosynthesis. Cell wall formation. This is UDP-N-acetylenolpyruvoylglucosamine reductase from Staphylococcus aureus (strain Mu3 / ATCC 700698).